The primary structure comprises 117 residues: Small ribosomal subunit protein uS17 (117 aa).

This sequence belongs to the universal ribosomal protein uS17 family. Part of the 30S ribosomal subunit.

Functionally, one of the primary rRNA binding proteins, it binds specifically to the 5'-end of 16S ribosomal RNA. The sequence is that of Small ribosomal subunit protein uS17 from Methanocaldococcus jannaschii (strain ATCC 43067 / DSM 2661 / JAL-1 / JCM 10045 / NBRC 100440) (Methanococcus jannaschii).